The primary structure comprises 1324 residues: DNA mismatch repair protein MSH6 (1324 aa).

The span at 1-25 (MAPSRRQISGRSPLVNQQRQITSFF) shows a compositional bias: polar residues. 2 disordered regions span residues 1-114 (MAPS…SPPQ) and 197-294 (KVVT…SKTD). Over residues 27 to 55 (KSASSSSSPSPSPSPSLSNKKTPKSNNPN) the composition is skewed to low complexity. The segment covering 56–67 (PKSPSPSPSPPK) has biased composition (pro residues). Low complexity predominate over residues 71–83 (KLNPNPSSNLPAR). Residues 201-224 (DSDDDVEMGNVEEDKSDGDDSSDE) are compositionally biased toward acidic residues. Over residues 225–235 (DWGKNVGKEVC) the composition is skewed to basic and acidic residues. Positions 236 to 261 (ESEEDDVELVDENEMDEEELVEEKDE) are enriched in acidic residues. Residues 262–273 (ETSKVNRVSKTD) show a composition bias toward basic and acidic residues. An ATP-binding site is contributed by 1083–1090 (GPNMGGKS).

Belongs to the DNA mismatch repair MutS family. In terms of assembly, heterodimer consisting of MSH2-MSH6 (MutS alpha).

It is found in the nucleus. Component of the post-replicative DNA mismatch repair system (MMR). Forms the heterodimer MutS alpha (MSH2-MSH6 heterodimer) which binds to DNA mismatches thereby initiating DNA repair. MutS alpha recognizes single base mismatches and trinucleotide insertion-deletion loops (IDL) in the DNA. Is involved in a UV-B-induced DNA damage response pathway. The sequence is that of DNA mismatch repair protein MSH6 (MSH6) from Arabidopsis thaliana (Mouse-ear cress).